Consider the following 339-residue polypeptide: MIDQKIFETTLNIDDPTNFCTNVEAHLLKELENIYVGKCFKNSFILNITGVIQRSPCFIMRTNNSGRGYMHVRFSAVVSYLNAFDLIAAVKIIKNDSNIILGESLLTEPVTIVIPSSESQNNVAEVGQIVPVQLANSSVYYIPGRQQASATGSIFIPKHTFSVYHVQEELTQEQALNLTKLVNIIEMLLESRSKKDFKQICFFEKLYYTYSISSDEILDLKIWKGPKGKEMSRLKPCNVLSFLYDALKNKSSSLGFWARPPNLLKSSPLAYQQDQNSFNATELPIICSAEVMFVTLLKEIINYLQFMNDLCDTFNNEQLIKRHENIWMLIEQRKIGHDF.

The protein belongs to the Asfivirus DNA-directed RNA polymerase RPB7 homolog family. Part of the viral DNA-directed RNA polymerase that consists of 8 polII-like subunits (RPB1, RPB2, RPB3, RPB5, RPB6, RPB7, RPB9, RPB10), a capping enzyme and a termination factor.

The protein localises to the host cytoplasm. Its subcellular location is the virion. Its function is as follows. Component of the DNA-directed RNA polymerase (RNAP) that catalyzes the transcription in the cytoplasm of viral DNA into RNA using the four ribonucleoside triphosphates as substrates. The protein is DNA-directed RNA polymerase RPB7 homolog of African swine fever virus (strain Badajoz 1971 Vero-adapted) (Ba71V).